The sequence spans 515 residues: Histidine ammonia-lyase (515 aa).

The 5-imidazolinone (Ala-Gly) cross-link spans 145–147 (ASG). Ser-146 is subject to 2,3-didehydroalanine (Ser).

This sequence belongs to the PAL/histidase family. Post-translationally, contains an active site 4-methylidene-imidazol-5-one (MIO), which is formed autocatalytically by cyclization and dehydration of residues Ala-Ser-Gly.

The protein localises to the cytoplasm. It carries out the reaction L-histidine = trans-urocanate + NH4(+). It participates in amino-acid degradation; L-histidine degradation into L-glutamate; N-formimidoyl-L-glutamate from L-histidine: step 1/3. This Gluconobacter oxydans (strain 621H) (Gluconobacter suboxydans) protein is Histidine ammonia-lyase.